Consider the following 288-residue polypeptide: Small ribosomal subunit protein uS2 (288 aa).

The tract at residues 267-288 is disordered; it reads EEVEEVEEEFIPSEIEDEDEKF.

It belongs to the universal ribosomal protein uS2 family.

In Petrotoga mobilis (strain DSM 10674 / SJ95), this protein is Small ribosomal subunit protein uS2.